Reading from the N-terminus, the 358-residue chain is F-box protein At4g35733 (358 aa).

Residues A4–H51 form the F-box domain.

As to quaternary structure, part of a SCF (ASK-cullin-F-box) protein ligase complex.

It functions in the pathway protein modification; protein ubiquitination. Functionally, component of SCF(ASK-cullin-F-box) E3 ubiquitin ligase complexes, which may mediate the ubiquitination and subsequent proteasomal degradation of target proteins. The chain is F-box protein At4g35733 from Arabidopsis thaliana (Mouse-ear cress).